Here is a 146-residue protein sequence, read N- to C-terminus: Putative pre-16S rRNA nuclease (146 aa).

The protein belongs to the YqgF nuclease family.

The protein resides in the cytoplasm. In terms of biological role, could be a nuclease involved in processing of the 5'-end of pre-16S rRNA. This Dechloromonas aromatica (strain RCB) protein is Putative pre-16S rRNA nuclease.